Consider the following 199-residue polypeptide: 3-isopropylmalate dehydratase small subunit (199 aa).

This sequence belongs to the LeuD family. LeuD type 1 subfamily. In terms of assembly, heterodimer of LeuC and LeuD.

The enzyme catalyses (2R,3S)-3-isopropylmalate = (2S)-2-isopropylmalate. Its pathway is amino-acid biosynthesis; L-leucine biosynthesis; L-leucine from 3-methyl-2-oxobutanoate: step 2/4. In terms of biological role, catalyzes the isomerization between 2-isopropylmalate and 3-isopropylmalate, via the formation of 2-isopropylmaleate. This chain is 3-isopropylmalate dehydratase small subunit, found in Aeromonas salmonicida (strain A449).